We begin with the raw amino-acid sequence, 553 residues long: Hydroxylamine reductase (553 aa).

[2Fe-2S] cluster is bound by residues C3, C6, C18, and C25. Positions 252, 276, 320, 408, 436, 461, 495, and 497 each coordinate hybrid [4Fe-2O-2S] cluster. C408 is subject to Cysteine persulfide.

Belongs to the HCP family. It depends on [2Fe-2S] cluster as a cofactor. Hybrid [4Fe-2O-2S] cluster serves as cofactor.

The protein localises to the cytoplasm. It carries out the reaction A + NH4(+) + H2O = hydroxylamine + AH2 + H(+). Functionally, catalyzes the reduction of hydroxylamine to form NH(3) and H(2)O. The polypeptide is Hydroxylamine reductase (Vibrio parahaemolyticus serotype O3:K6 (strain RIMD 2210633)).